Consider the following 553-residue polypeptide: CTP synthase (553 aa).

The interval 1–270 (MTKYVFVTGG…DELICEELKL (270 aa)) is amidoligase domain. Residue serine 13 participates in CTP binding. UTP is bound at residue serine 13. Residues 14–19 (SLGKGI) and aspartate 71 contribute to the ATP site. Positions 71 and 144 each coordinate Mg(2+). Residues 151-153 (DIE), 191-196 (KTKPTQ), and lysine 227 contribute to the CTP site. UTP-binding positions include 191-196 (KTKPTQ) and lysine 227. A Glutamine amidotransferase type-1 domain is found at 295-547 (TIGMVGKYVE…VEAARAHHEA (253 aa)). An L-glutamine-binding site is contributed by glycine 356. The active-site Nucleophile; for glutamine hydrolysis is the cysteine 383. Residues 384–387 (LGMQ), glutamate 407, and arginine 473 each bind L-glutamine. Active-site residues include histidine 520 and glutamate 522.

This sequence belongs to the CTP synthase family. As to quaternary structure, homotetramer.

It carries out the reaction UTP + L-glutamine + ATP + H2O = CTP + L-glutamate + ADP + phosphate + 2 H(+). It catalyses the reaction L-glutamine + H2O = L-glutamate + NH4(+). The enzyme catalyses UTP + NH4(+) + ATP = CTP + ADP + phosphate + 2 H(+). It participates in pyrimidine metabolism; CTP biosynthesis via de novo pathway; CTP from UDP: step 2/2. Allosterically activated by GTP, when glutamine is the substrate; GTP has no effect on the reaction when ammonia is the substrate. The allosteric effector GTP functions by stabilizing the protein conformation that binds the tetrahedral intermediate(s) formed during glutamine hydrolysis. Inhibited by the product CTP, via allosteric rather than competitive inhibition. Catalyzes the ATP-dependent amination of UTP to CTP with either L-glutamine or ammonia as the source of nitrogen. Regulates intracellular CTP levels through interactions with the four ribonucleotide triphosphates. The polypeptide is CTP synthase (Paraburkholderia phymatum (strain DSM 17167 / CIP 108236 / LMG 21445 / STM815) (Burkholderia phymatum)).